A 208-amino-acid chain; its full sequence is Phosphoheptose isomerase (208 aa).

The SIS domain occupies 38–200 (MAVTLAKGHK…LFENVLALQP (163 aa)). A substrate-binding site is contributed by 53-55 (NGG). Residues His62 and Glu66 each contribute to the Zn(2+) site. Substrate contacts are provided by residues Glu66, 95–96 (ND), 121–123 (STS), Ser126, and Gln173. Zn(2+) is bound by residues Gln173 and His181.

This sequence belongs to the SIS family. GmhA subfamily. In terms of assembly, homotetramer. The cofactor is Zn(2+).

The protein localises to the cytoplasm. It catalyses the reaction 2 D-sedoheptulose 7-phosphate = D-glycero-alpha-D-manno-heptose 7-phosphate + D-glycero-beta-D-manno-heptose 7-phosphate. It functions in the pathway carbohydrate biosynthesis; D-glycero-D-manno-heptose 7-phosphate biosynthesis; D-glycero-alpha-D-manno-heptose 7-phosphate and D-glycero-beta-D-manno-heptose 7-phosphate from sedoheptulose 7-phosphate: step 1/1. Functionally, catalyzes the isomerization of sedoheptulose 7-phosphate in D-glycero-D-manno-heptose 7-phosphate. The sequence is that of Phosphoheptose isomerase from Nitratidesulfovibrio vulgaris (strain ATCC 29579 / DSM 644 / CCUG 34227 / NCIMB 8303 / VKM B-1760 / Hildenborough) (Desulfovibrio vulgaris).